A 500-amino-acid polypeptide reads, in one-letter code: NAD(P)H-quinone oxidoreductase chain 4, chloroplastic (500 aa).

Helical transmembrane passes span 4–24 (FPWLTIIVVFPIFAGSLIFFL), 35–55 (YTICICILELLLTTYAFCYHF), 87–107 (IGPILLTGFITTLATLAAWPV), 134–154 (LLLFFIMWELELIPVYLLLAM), 167–187 (FILYTAGGSVFLLMGVLGVAL), 208–228 (VLEIIFYIGFFIAFAVKSPII), 242–262 (HYSTCMLLAGILLKMGAYGLI), 272–292 (AHSIFSPWLMIIGTIQIIYAA), 305–325 (IAYPSVSHMGFIIIGISSLTD), 330–350 (GALLQIISHGFIGAALFFLAG), 386–406 (LALPGMSGFVAELIVFFGIIT), 411–431 (LLIPKLLITFVMAIGIILTPI), and 462–482 (LFLSISIFLPVIGIGIYPDFV).

The protein belongs to the complex I subunit 4 family.

It localises to the plastid. Its subcellular location is the chloroplast thylakoid membrane. It catalyses the reaction a plastoquinone + NADH + (n+1) H(+)(in) = a plastoquinol + NAD(+) + n H(+)(out). The enzyme catalyses a plastoquinone + NADPH + (n+1) H(+)(in) = a plastoquinol + NADP(+) + n H(+)(out). This Solanum tuberosum (Potato) protein is NAD(P)H-quinone oxidoreductase chain 4, chloroplastic.